The primary structure comprises 546 residues: Crossover junction endonuclease EME1A (546 aa).

Disordered regions lie at residues 1-55 and 88-232; these read MSDF…FLDE and VISL…REKQ. A compositionally biased stretch (polar residues) spans 28 to 49; it reads PTDLNLDTEPSLQKQPPGSAST. 2 stretches are compositionally biased toward basic and acidic residues: residues 103-120 and 149-167; these read SSKK…KPCR and DAIE…VEKM. Over residues 173–183 the composition is skewed to polar residues; sequence TITSKSTSLSA. A coiled-coil region spans residues 188 to 245; it reads KKKMSKDEKTRAAEEKKLQKEQEKLQKAASKAEDAEHKKLEREKQKWAKEKDKALKCI. The span at 192–232 shows a compositional bias: basic and acidic residues; it reads SKDEKTRAAEEKKLQKEQEKLQKAASKAEDAEHKKLEREKQ. The ERCC4 domain occupies 278–478; that stretch reads NPIQRSIVWT…PSLKSLLKVY (201 aa).

Belongs to the EME1/MMS4 family. In terms of assembly, forms a heterodimer with MUS81. The cofactor is Mg(2+). Ca(2+) serves as cofactor.

It localises to the nucleus. Its function is as follows. Interacts with MUS81 to form a DNA structure-specific endonuclease with substrate preference for branched DNA structures with a 5'-end at the branch nick. Typical substrates include 3'-flap structures, D-loops, replication forks, nicked Holliday junctions and also intact Holliday junctions with a reduced efficiency. May be required in mitosis for the processing of stalled or collapsed replication fork intermediates. Plays a role in DNA repair and in genotoxic stress-induced homologous recombination (HR) in somatic cells. Mediates a subset of meiotic recombination events that are insensitive to crossover interference. This is Crossover junction endonuclease EME1A (EME1A) from Arabidopsis thaliana (Mouse-ear cress).